The following is a 376-amino-acid chain: MLRALKGHVESPLIVVTRAASTNAEKLEEIRERLAKGPNFQDFVQNPDYSKSEWENYEGKLRREKGEEQRLRLPPWLKTTIPMGKNYAKIKNQLRELKLSTVCEEARCPNIGECWGGGEHGTQTATIMLMGDTCTRGCRFCSVKTARKPPPLDENEPVNTATAIASWGLDYIVLTSVDRDDLPDGGSKHIAKTVKEIKARNSNIFVECLVPDFRGDLGCVETIANCGLDVYAHNIETVEKLTPYVRDRRAHYRQTLKVLSEAKRFNPNLITKSSIMLGLGETDEEVENTLKDLREAGVDCITLGQYMQPTNKHLKVIEYVTPEKFKHWEDRGNQLGFLYTASGPLVRSSYKAGEFFITSILENRKKRQALNSKPEQ.

Cys-103, Cys-108, Cys-114, Cys-134, Cys-138, Cys-141, and Ser-349 together coordinate [4Fe-4S] cluster. In terms of domain architecture, Radical SAM core spans 119 to 338 (EHGTQTATIM…EDRGNQLGFL (220 aa)).

The protein belongs to the radical SAM superfamily. Lipoyl synthase family. [4Fe-4S] cluster is required as a cofactor.

The protein localises to the mitochondrion. The catalysed reaction is [[Fe-S] cluster scaffold protein carrying a second [4Fe-4S](2+) cluster] + N(6)-octanoyl-L-lysyl-[protein] + 2 oxidized [2Fe-2S]-[ferredoxin] + 2 S-adenosyl-L-methionine + 4 H(+) = [[Fe-S] cluster scaffold protein] + N(6)-[(R)-dihydrolipoyl]-L-lysyl-[protein] + 4 Fe(3+) + 2 hydrogen sulfide + 2 5'-deoxyadenosine + 2 L-methionine + 2 reduced [2Fe-2S]-[ferredoxin]. It participates in protein modification; protein lipoylation via endogenous pathway; protein N(6)-(lipoyl)lysine from octanoyl-[acyl-carrier-protein]: step 2/2. Its function is as follows. Catalyzes the radical-mediated insertion of two sulfur atoms into the C-6 and C-8 positions of the octanoyl moiety bound to the lipoyl domains of lipoate-dependent enzymes, thereby converting the octanoylated domains into lipoylated derivatives. The protein is Lipoyl synthase, mitochondrial of Drosophila ananassae (Fruit fly).